Reading from the N-terminus, the 955-residue chain is Disintegrin and metalloproteinase domain-containing protein 19 (955 aa).

The N-terminal stretch at 1–25 (MPGGAGAARLCLLAFALQPLRPRAA) is a signal peptide. Residues 26-202 (REPGWTRGSE…QTKKRPRRMK (177 aa)) constitute a propeptide that is removed on maturation. Residues 130–137 (STCRGIRG) carry the Cysteine switch motif. Zn(2+) is bound at residue Cys-132. A glycan (N-linked (GlcNAc...) asparagine) is linked at Asn-144. Residues 203-699 (REDLNSMKYV…IDSGPMPPES (497 aa)) are Extracellular-facing. The Peptidase M12B domain maps to 210–408 (KYVELYLVAD…GGGMCLSNMP (199 aa)). 3 disulfide bridges follow: Cys-320–Cys-403, Cys-360–Cys-387, and Cys-361–Cys-370. Position 345 (His-345) interacts with Zn(2+). Glu-346 is a catalytic residue. 2 residues coordinate Zn(2+): His-349 and His-355. The region spanning 416–502 (GRRCGNGYLE…HCPTNFYQMD (87 aa)) is the Disintegrin domain. Residues Asn-444 and Asn-447 are each glycosylated (N-linked (GlcNAc...) asparagine). Cys-474 and Cys-494 are joined by a disulfide. The N-linked (GlcNAc...) asparagine glycan is linked to Asn-645. Residues 650 to 682 (ETEGCGKKCNGHGVCNNNQNCHCLPGWAPPFCN) form the EGF-like domain. Disulfide bonds link Cys-654–Cys-664, Cys-658–Cys-670, and Cys-672–Cys-681. A helical transmembrane segment spans residues 700 to 720 (VGPVVAGVLVAILVLAVLMLM). Residues 721–955 (YYCCRQNNKL…AKHSCFLVPA (235 aa)) are Cytoplasmic-facing. Polar residues predominate over residues 753 to 771 (SQNSGTGHANPTFKLQTPQ). The segment at 753-917 (SQNSGTGHAN…LKVKAGTRGL (165 aa)) is disordered. Pro residues-rich tracts occupy residues 787-796 (SQPPPRPPPD) and 833-844 (RPPPSRPIPPAP). Positions 833–844 (RPPPSRPIPPAP) match the SH3-binding motif.

Interacts with SH3PXD2A. Zn(2+) serves as cofactor. Post-translationally, the precursor is cleaved by a furin endopeptidase. Expressed in many normal organ tissues and several cancer cell lines.

It localises to the membrane. Functionally, participates in the proteolytic processing of beta-type neuregulin isoforms which are involved in neurogenesis and synaptogenesis, suggesting a regulatory role in glial cell. Also cleaves alpha-2 macroglobulin. May be involved in osteoblast differentiation and/or osteoblast activity in bone. This is Disintegrin and metalloproteinase domain-containing protein 19 (ADAM19) from Homo sapiens (Human).